A 241-amino-acid polypeptide reads, in one-letter code: Chaperone protein HifB (241 aa).

Residues 1–27 form the signal peptide; the sequence is MGKTMFKKTLLFFTALFFTALCAFSAN.

This sequence belongs to the periplasmic pilus chaperone family.

It is found in the periplasm. Mediates assembly of pili by forming soluble multimeric complexes with pili subunits as an intermediate step in the assembly process. This protein is involved in type B pili (HifA) assembly. The sequence is that of Chaperone protein HifB (hifB) from Haemophilus influenzae.